The chain runs to 699 residues: Kinesin-like protein KIF3A (699 aa).

Residues 14–345 (NVKVVVRCRP…LRYANRAKNI (332 aa)) enclose the Kinesin motor domain. Residue 100–107 (GQTGTGKT) participates in ATP binding. Positions 355 to 590 (PKDALLRQFQ…LSRELRLQML (236 aa)) form a coiled coil. Disordered stretches follow at residues 372–421 (KKLE…KMIE) and 663–699 (SLMK…SLLQ). Residues 376 to 400 (EGEEISGSDISGSEEDDDEEGEVGE) are compositionally biased toward acidic residues. The segment covering 672–687 (TSKGKARPKTGRRKRS) has biased composition (basic residues). A Phosphoserine modification is found at Ser-687. A globular region spans residues 697 to 699 (LLQ).

This sequence belongs to the TRAFAC class myosin-kinesin ATPase superfamily. Kinesin family. Kinesin II subfamily. In terms of assembly, heterodimer of KIF3A and KIF3B. Interacts with CIMAP3. Interacts with CLN3. Interacts with DCTN1. Interacts with FLCN. Interacts with AP3B1.

Its subcellular location is the cytoplasm. The protein resides in the cytoskeleton. It localises to the cell projection. The protein localises to the cilium. It is found in the microtubule organizing center. Its subcellular location is the centrosome. The protein resides in the centriole. Microtubule-based anterograde translocator for membranous organelles. Plus end-directed microtubule sliding activity in vitro. Plays a role in primary cilia formation. Plays a role in centriole cohesion and subdistal appendage organization and function. Regulates the formation of the subdistal appendage via recruitment of DCTN1 to the centriole. Also required for ciliary basal feet formation and microtubule anchoring to mother centriole. This chain is Kinesin-like protein KIF3A (KIF3A), found in Homo sapiens (Human).